The sequence spans 628 residues: 1-deoxy-D-xylulose-5-phosphate synthase (628 aa).

Residues H72 and 113-115 (GHS) each bind thiamine diphosphate. Mg(2+) is bound at residue D144. Thiamine diphosphate-binding positions include 145–146 (GA), N173, Y284, and E363. Mg(2+) is bound at residue N173.

The protein belongs to the transketolase family. DXPS subfamily. In terms of assembly, homodimer. The cofactor is Mg(2+). Thiamine diphosphate is required as a cofactor.

The enzyme catalyses D-glyceraldehyde 3-phosphate + pyruvate + H(+) = 1-deoxy-D-xylulose 5-phosphate + CO2. The protein operates within metabolic intermediate biosynthesis; 1-deoxy-D-xylulose 5-phosphate biosynthesis; 1-deoxy-D-xylulose 5-phosphate from D-glyceraldehyde 3-phosphate and pyruvate: step 1/1. Catalyzes the acyloin condensation reaction between C atoms 2 and 3 of pyruvate and glyceraldehyde 3-phosphate to yield 1-deoxy-D-xylulose-5-phosphate (DXP). This chain is 1-deoxy-D-xylulose-5-phosphate synthase, found in Brevibacillus brevis (strain 47 / JCM 6285 / NBRC 100599).